We begin with the raw amino-acid sequence, 55 residues long: Light-harvesting polypeptide B-800/860 beta chain (55 aa).

The Cytoplasmic portion of the chain corresponds to Ala1–Thr21. Residues Tyr22–Ala44 form a helical membrane-spanning segment. His38 is a binding site for a bacteriochlorophyll. Over His45–Ala55 the chain is Periplasmic.

The protein belongs to the antenna complex beta subunit family. The core complex is formed by different alpha and beta chains, binding bacteriochlorophyll molecules, and arranged most probably in tetrameric structures disposed around the reaction center. The non-pigmented gamma chains may constitute additional components.

It is found in the cell inner membrane. Its function is as follows. Antenna complexes are light-harvesting systems, which transfer the excitation energy to the reaction centers. In Rhodocyclus tenuis (Rhodospirillum tenue), this protein is Light-harvesting polypeptide B-800/860 beta chain.